A 545-amino-acid chain; its full sequence is Threonine--tRNA ligase catalytic subunit (545 aa).

The tract at residues 139–433 (DHRLIGEKLD…LLEHFKGKLP (295 aa)) is catalytic. Residues cysteine 231, histidine 282, and histidine 410 each coordinate Zn(2+).

It belongs to the class-II aminoacyl-tRNA synthetase family. As to quaternary structure, homodimer. Probably interacts with its editing subunit. Zn(2+) is required as a cofactor.

The protein localises to the cytoplasm. It carries out the reaction tRNA(Thr) + L-threonine + ATP = L-threonyl-tRNA(Thr) + AMP + diphosphate + H(+). Its function is as follows. Catalyzes the attachment of threonine to tRNA(Thr) in a two-step reaction: L-threonine is first activated by ATP to form Thr-AMP and then transferred to the acceptor end of tRNA(Thr). Also activates L-serine and transfers it to tRNA(Thr) but cannot deacylate incorrectly charged amino acid; unlike most archaea the editing function is found in a freestanding protein. This chain is Threonine--tRNA ligase catalytic subunit, found in Saccharolobus islandicus (strain M.16.27) (Sulfolobus islandicus).